We begin with the raw amino-acid sequence, 490 residues long: Cardiolipin synthase A (490 aa).

2 helical membrane-spanning segments follow: residues 4–24 (YLFT…IIIV) and 39–59 (AAWL…WFLL). PLD phosphodiesterase domains follow at residues 220–247 (MDLR…VDPY) and 403–430 (KKGL…DMRS). Residues histidine 225, lysine 227, aspartate 232, histidine 408, lysine 410, and aspartate 415 contribute to the active site.

Belongs to the phospholipase D family. Cardiolipin synthase subfamily. ClsA sub-subfamily.

It localises to the cell membrane. It catalyses the reaction 2 a 1,2-diacyl-sn-glycero-3-phospho-(1'-sn-glycerol) = a cardiolipin + glycerol. Functionally, catalyzes the reversible phosphatidyl group transfer from one phosphatidylglycerol molecule to another to form cardiolipin (CL) (diphosphatidylglycerol) and glycerol. This chain is Cardiolipin synthase A, found in Buchnera aphidicola subsp. Baizongia pistaciae (strain Bp).